Consider the following 220-residue polypeptide: Ras-related protein Rab-3A (220 aa).

The GTP site is built by serine 31, serine 32, valine 33, glycine 34, lysine 35, threonine 36, serine 37, threonine 48, proline 49, serine 53, and threonine 54. Residue threonine 36 coordinates Mg(2+). Positions 49–58 (PAFVSTVGID) match the Switch 1 motif. Residues threonine 54 and aspartate 77 each contribute to the Mg(2+) site. Glycine 80 is a GTP binding site. Positions 80–96 (GQERYRTITTAYYRGAM) match the Switch 2 motif. Position 86 is a phosphothreonine (threonine 86). 5 residues coordinate GTP: asparagine 135, lysine 136, aspartate 138, alanine 166, and lysine 167. 2 positions are modified to phosphoserine: serine 188 and serine 190. Residues 194–220 (ADPAVTGAKQGPQLTDQQAPPHQDCAC) form a disordered region. 2 S-geranylgeranyl cysteine lipidation sites follow: cysteine 218 and cysteine 220. Cysteine 220 carries the cysteine methyl ester modification.

It belongs to the small GTPase superfamily. Rab family. In terms of assembly, interacts with RIMS1 and RIMS2. Interacts with Rabphilin-3A/RPH3A and Rab effector Noc2/RPH3AL. Interacts with SYTL4. Interacts with RAB3IP. Interacts with SGSM1 and SGSM3. Interacts with SYT1. Interacts with MYH9; this interaction is essential for lysosome exocytosis and plasma membrane repair. Interacts with STXBP1; this interaction promotes RAB3A dissociation from the vesicle membrane. Interacts with SNCA. Interacts with GDI1, GDI2, CHM and CHML; phosphorylation at Thr-86 disrupts these interactions. Interacts with MADD (via uDENN domain); the GTP-bound form is preferred for interaction. Mg(2+) serves as cofactor. Post-translationally, phosphorylation of Thr-86 in the switch II region by LRRK2 prevents the association of RAB regulatory proteins, including CHM, CHML and RAB GDP dissociation inhibitors GDI1 and GDI2.

It is found in the cytoplasm. Its subcellular location is the cytosol. It localises to the lysosome. The protein localises to the cytoplasmic vesicle. The protein resides in the secretory vesicle. It is found in the cell projection. Its subcellular location is the axon. It localises to the cell membrane. The protein localises to the presynapse. The protein resides in the postsynapse. It catalyses the reaction GTP + H2O = GDP + phosphate + H(+). With respect to regulation, regulated by guanine nucleotide exchange factors (GEFs) including RAB3IL1 and MADD which promote the exchange of bound GDP for free GTP. Regulated by GTPase activating proteins (GAPs) including RAB3GAP1 and TBC1D10B which increase the GTP hydrolysis activity. Inhibited by GDP dissociation inhibitors (GDIs) which prevent Rab-GDP dissociation. In terms of biological role, the small GTPases Rab are key regulators of intracellular membrane trafficking, from the formation of transport vesicles to their fusion with membranes. Rabs cycle between an inactive GDP-bound form and an active GTP-bound form that is able to recruit to membranes different sets of downstream effectors directly responsible for vesicle formation, movement, tethering and fusion. RAB3A plays a central role in regulated exocytosis and secretion. Controls the recruitment, tethering and docking of secretory vesicles to the plasma membrane. Upon stimulation, switches to its active GTP-bound form, cycles to vesicles and recruits effectors such as RIMS1, RIMS2, Rabphilin-3A/RPH3A, RPH3AL or SYTL4 to help the docking of vesicules onto the plasma membrane. Upon GTP hydrolysis by GTPase-activating protein, dissociates from the vesicle membrane allowing the exocytosis to proceed. Stimulates insulin secretion through interaction with RIMS2 or RPH3AL effectors in pancreatic beta cells. Regulates calcium-dependent lysosome exocytosis and plasma membrane repair (PMR) via the interaction with 2 effectors, SYTL4 and myosin-9/MYH9. Acts as a positive regulator of acrosome content secretion in sperm cells by interacting with RIMS1. Also plays a role in the regulation of dopamine release by interacting with synaptotagmin I/SYT. The polypeptide is Ras-related protein Rab-3A (RAB3A) (Sus scrofa (Pig)).